Consider the following 136-residue polypeptide: ATP synthase epsilon chain (136 aa).

Belongs to the ATPase epsilon chain family. As to quaternary structure, F-type ATPases have 2 components, CF(1) - the catalytic core - and CF(0) - the membrane proton channel. CF(1) has five subunits: alpha(3), beta(3), gamma(1), delta(1), epsilon(1). CF(0) has three main subunits: a, b and c.

It localises to the cell membrane. Produces ATP from ADP in the presence of a proton gradient across the membrane. The protein is ATP synthase epsilon chain of Herpetosiphon aurantiacus (strain ATCC 23779 / DSM 785 / 114-95).